The chain runs to 122 residues: Large ribosomal subunit protein uL14 (122 aa).

The protein belongs to the universal ribosomal protein uL14 family. Part of the 50S ribosomal subunit. Forms a cluster with proteins L3 and L19. In the 70S ribosome, L14 and L19 interact and together make contacts with the 16S rRNA in bridges B5 and B8.

Functionally, binds to 23S rRNA. Forms part of two intersubunit bridges in the 70S ribosome. The sequence is that of Large ribosomal subunit protein uL14 from Geobacillus kaustophilus (strain HTA426).